Here is a 103-residue protein sequence, read N- to C-terminus: Large ribosomal subunit protein uL24 (103 aa).

The protein belongs to the universal ribosomal protein uL24 family. As to quaternary structure, part of the 50S ribosomal subunit.

In terms of biological role, one of two assembly initiator proteins, it binds directly to the 5'-end of the 23S rRNA, where it nucleates assembly of the 50S subunit. One of the proteins that surrounds the polypeptide exit tunnel on the outside of the subunit. This Actinobacillus pleuropneumoniae serotype 5b (strain L20) protein is Large ribosomal subunit protein uL24.